Here is a 280-residue protein sequence, read N- to C-terminus: Hydroxyethylthiazole kinase (280 aa).

Met58 is a substrate binding site. Arg129 contacts ATP. Substrate is bound at residue Ala206.

It belongs to the Thz kinase family. It depends on Mg(2+) as a cofactor.

It catalyses the reaction 5-(2-hydroxyethyl)-4-methylthiazole + ATP = 4-methyl-5-(2-phosphooxyethyl)-thiazole + ADP + H(+). It participates in cofactor biosynthesis; thiamine diphosphate biosynthesis; 4-methyl-5-(2-phosphoethyl)-thiazole from 5-(2-hydroxyethyl)-4-methylthiazole: step 1/1. Functionally, thiazole kinase involved in thiamine salvage pathway. The sequence is that of Hydroxyethylthiazole kinase (THIM) from Zea mays (Maize).